Consider the following 1592-residue polypeptide: Laminin subunit gamma-1 (1592 aa).

The first 19 residues, methionine 1–alanine 19, serve as a signal peptide directing secretion. Residues serine 29–arginine 268 form the Laminin N-terminal domain. Asparagine 43 and asparagine 117 each carry an N-linked (GlcNAc...) asparagine glycan. Intrachain disulfides connect cysteine 269/cysteine 278, cysteine 271/cysteine 288, cysteine 290/cysteine 299, cysteine 302/cysteine 322, cysteine 325/cysteine 334, cysteine 327/cysteine 350, cysteine 353/cysteine 362, cysteine 365/cysteine 378, cysteine 381/cysteine 393, cysteine 383/cysteine 399, cysteine 401/cysteine 410, cysteine 413/cysteine 425, cysteine 428/cysteine 439, cysteine 430/cysteine 446, cysteine 448/cysteine 457, and cysteine 460/cysteine 475. 4 Laminin EGF-like domains span residues cysteine 269–proline 324, cysteine 325–alanine 380, cysteine 381–proline 427, and cysteine 428–proline 477. Positions serine 504–isoleucine 672 constitute a Laminin IV type A domain. Residues asparagine 559 and asparagine 633 are each glycosylated (N-linked (GlcNAc...) asparagine). 24 cysteine pairs are disulfide-bonded: cysteine 707-cysteine 716, cysteine 709-cysteine 723, cysteine 725-cysteine 734, cysteine 737-cysteine 753, cysteine 756-cysteine 764, cysteine 758-cysteine 775, cysteine 778-cysteine 787, cysteine 790-cysteine 808, cysteine 811-cysteine 825, cysteine 813-cysteine 832, cysteine 835-cysteine 844, cysteine 847-cysteine 864, cysteine 867-cysteine 881, cysteine 869-cysteine 888, cysteine 890-cysteine 899, cysteine 902-cysteine 915, cysteine 918-cysteine 930, cysteine 920-cysteine 937, cysteine 939-cysteine 948, cysteine 951-cysteine 963, cysteine 966-cysteine 978, cysteine 968-cysteine 984, cysteine 986-cysteine 995, and cysteine 998-cysteine 1011. Laminin EGF-like domains lie at cysteine 707 to proline 755, cysteine 756 to isoleucine 810, cysteine 811 to alanine 866, cysteine 867 to arginine 917, cysteine 918 to proline 965, and cysteine 966 to glutamate 1013. 11 N-linked (GlcNAc...) asparagine glycosylation sites follow: asparagine 1005, asparagine 1041, asparagine 1048, asparagine 1090, asparagine 1144, asparagine 1158, asparagine 1188, asparagine 1206, asparagine 1253, asparagine 1363, and asparagine 1386. Positions glutamate 1013–proline 1592 are domain II and I. The stretch at tyrosine 1018 to asparagine 1477 forms a coiled coil. The span at asparagine 1456–alanine 1472 shows a compositional bias: basic and acidic residues. A disordered region spans residues asparagine 1456–serine 1489. Residues serine 1476–serine 1489 are compositionally biased toward polar residues. Residues asparagine 1477 and asparagine 1487 are each glycosylated (N-linked (GlcNAc...) asparagine). Positions valine 1515–leucine 1579 form a coiled coil.

Laminin is a complex glycoprotein, consisting of three different polypeptide chains (alpha, beta, gamma), which are bound to each other by disulfide bonds into a cross-shaped molecule comprising one long and three short arms with globules at each end.

Its subcellular location is the secreted. It is found in the extracellular space. The protein resides in the extracellular matrix. It localises to the basement membrane. Binding to cells via a high affinity receptor, laminin is thought to mediate the attachment, migration and organization of cells into tissues during embryonic development by interacting with other extracellular matrix components. The chain is Laminin subunit gamma-1 (lamc1) from Xenopus tropicalis (Western clawed frog).